A 298-amino-acid chain; its full sequence is MPVDKNLRDLEPGIHTDLEGRLTYGGYLRLDQLLSAQQPLSEPAHHDEMLFIIQHQTSELWLKLLAHELRAAIVHLQRDEVWQCRKVLARSKQVLRQLTEQWSVLETLTPSEYMGFRDVLGPSSGFQSLQYRYIEFLLGNKNPQMLQVFAYDPAGQARLREVLEAPSLYEEFLRYLARFGHAIPQQYQARDWTAAHVADDTLRPVFERIYENTDRYWREYSLCEDLVDVETQFQLWRFRHMRTVMRVIGFKRGTGGSSGVGFLQQALALTFFPELFDVRTSVGVDNRPPQGSADAGKR.

Residues 51-55 (FIIQH), Y113, and R117 each bind substrate. H240 contacts heme. Residue T254 participates in substrate binding.

The protein belongs to the tryptophan 2,3-dioxygenase family. Homotetramer. It depends on heme as a cofactor.

The enzyme catalyses L-tryptophan + O2 = N-formyl-L-kynurenine. Its pathway is amino-acid degradation; L-tryptophan degradation via kynurenine pathway; L-kynurenine from L-tryptophan: step 1/2. Heme-dependent dioxygenase that catalyzes the oxidative cleavage of the L-tryptophan (L-Trp) pyrrole ring and converts L-tryptophan to N-formyl-L-kynurenine. Catalyzes the oxidative cleavage of the indole moiety. The protein is Tryptophan 2,3-dioxygenase of Xanthomonas campestris pv. campestris (strain 8004).